The primary structure comprises 439 residues: Chitinase-like protein Idgf1 (439 aa).

The signal sequence occupies residues 1–20; sequence MRFQLFYILGLLSVTSLTQA. Positions 22 to 439 constitute a GH18 domain; that stretch reads NNLVCYYDST…IVRSIKYFMG (418 aa). An intrachain disulfide couples Cys-26 to Cys-53. N-linked (GlcNAc...) asparagine glycans are attached at residues Asn-122, Asn-218, and Asn-346. Residues Cys-340 and Cys-423 are joined by a disulfide bond.

Belongs to the glycosyl hydrolase 18 family. IDGF subfamily. Glycosylated.

Its subcellular location is the secreted. Cooperates with insulin-like peptides to stimulate the proliferation, polarization and motility of imaginal disk cells. May act by stabilizing the binding of insulin-like peptides to its receptor through a simultaneous interaction with both molecules to form a multiprotein signaling complex. In Drosophila simulans (Fruit fly), this protein is Chitinase-like protein Idgf1 (Idgf1).